Here is a 718-residue protein sequence, read N- to C-terminus: Polyribonucleotide nucleotidyltransferase (718 aa).

Asp487 and Asp493 together coordinate Mg(2+). The 60-residue stretch at 554–613 folds into the KH domain; the sequence is PRIETFKIPTDKIREVIGTGGKVIREIVEKTGAKVNIEDDGTVKVASSDGESIKAAIKWI. One can recognise an S1 motif domain in the interval 623 to 691; sequence GEIYEGTVVK…DRGKTRLSMK (69 aa). The segment at 692-718 is disordered; that stretch reads VVDQETGEDLEAKQKAEGDAPREAAGE. Positions 701–718 are enriched in basic and acidic residues; that stretch reads LEAKQKAEGDAPREAAGE.

This sequence belongs to the polyribonucleotide nucleotidyltransferase family. Mg(2+) is required as a cofactor.

Its subcellular location is the cytoplasm. The catalysed reaction is RNA(n+1) + phosphate = RNA(n) + a ribonucleoside 5'-diphosphate. Its function is as follows. Involved in mRNA degradation. Catalyzes the phosphorolysis of single-stranded polyribonucleotides processively in the 3'- to 5'-direction. This chain is Polyribonucleotide nucleotidyltransferase, found in Nitrobacter winogradskyi (strain ATCC 25391 / DSM 10237 / CIP 104748 / NCIMB 11846 / Nb-255).